Consider the following 521-residue polypeptide: Type II methyltransferase M.AluI (521 aa).

The SAM-dependent MTase C5-type domain maps to 8-491 (YSFVDLFAGI…REHVRRDRAL (484 aa)). Cysteine 84 is a catalytic residue.

This sequence belongs to the class I-like SAM-binding methyltransferase superfamily. C5-methyltransferase family.

It catalyses the reaction a 2'-deoxycytidine in DNA + S-adenosyl-L-methionine = a 5-methyl-2'-deoxycytidine in DNA + S-adenosyl-L-homocysteine + H(+). A methylase, recognizes the double-stranded sequence 5'-AGCT-3', methylates C-3 on both strands, and protects the DNA from cleavage by the AluI endonuclease. The protein is Type II methyltransferase M.AluI of Cellulosimicrobium cellulans (Arthrobacter luteus).